The following is a 483-amino-acid chain: Regulatory protein ViaA (483 aa).

The protein belongs to the ViaA family. In terms of assembly, homodimer. Interacts with RavA.

The protein localises to the cytoplasm. In terms of biological role, component of the RavA-ViaA chaperone complex, which may act on the membrane to optimize the function of some of the respiratory chains. ViaA stimulates the ATPase activity of RavA. The sequence is that of Regulatory protein ViaA from Escherichia coli O7:K1 (strain IAI39 / ExPEC).